Consider the following 133-residue polypeptide: Fluoride-specific ion channel FluC 3 (133 aa).

Transmembrane regions (helical) follow at residues 7–27 (ILVL…SGYV), 37–57 (WGTF…AGLG), and 60–80 (LGAI…LLGG). Gly79 and Thr82 together coordinate Na(+). The helical transmembrane segment at 107-127 (IVASALLCVLAVAAGYGGIMW) threads the bilayer.

This sequence belongs to the fluoride channel Fluc/FEX (TC 1.A.43) family.

The protein localises to the cell inner membrane. It carries out the reaction fluoride(in) = fluoride(out). With respect to regulation, na(+) is not transported, but it plays an essential structural role and its presence is essential for fluoride channel function. Fluoride-specific ion channel. Important for reducing fluoride concentration in the cell, thus reducing its toxicity. This is Fluoride-specific ion channel FluC 3 from Brucella suis biovar 1 (strain 1330).